The primary structure comprises 354 residues: Peptide chain release factor 1 (354 aa).

Residue Gln-230 is modified to N5-methylglutamine. Residues 282-301 (KQASDAIKKQMIGSGDRSER) are disordered.

This sequence belongs to the prokaryotic/mitochondrial release factor family. Post-translationally, methylated by PrmC. Methylation increases the termination efficiency of RF1.

Its subcellular location is the cytoplasm. In terms of biological role, peptide chain release factor 1 directs the termination of translation in response to the peptide chain termination codons UAG and UAA. This is Peptide chain release factor 1 from Leptospira borgpetersenii serovar Hardjo-bovis (strain L550).